The following is a 165-amino-acid chain: Transcription antitermination protein NusB (165 aa).

Positions 1 to 27 are disordered; sequence MISDDTDQFNPRDAKSPEAAKGKSAKR. Positions 10–21 are enriched in basic and acidic residues; sequence NPRDAKSPEAAK.

It belongs to the NusB family.

Its function is as follows. Involved in transcription antitermination. Required for transcription of ribosomal RNA (rRNA) genes. Binds specifically to the boxA antiterminator sequence of the ribosomal RNA (rrn) operons. The protein is Transcription antitermination protein NusB of Pseudomonas savastanoi pv. phaseolicola (strain 1448A / Race 6) (Pseudomonas syringae pv. phaseolicola (strain 1448A / Race 6)).